Reading from the N-terminus, the 591-residue chain is Frizzled and smoothened-like protein F (591 aa).

Residues 1–17 (MKILIIFIIFIISYISG) form the signal peptide. The Extracellular portion of the chain corresponds to 18–244 (FEIPKGFGIG…KWDQLLTMSK (227 aa)). An FZ domain is found at 30 to 177 (IPDAECLNYI…GTFAVPCSDP (148 aa)). Disulfide bonds link Cys35-Cys105, Cys48-Cys98, and Cys123-Cys174. 4 N-linked (GlcNAc...) asparagine glycosylation sites follow: Asn167, Asn187, Asn202, and Asn230. The helical transmembrane segment at 245–265 (ILSTISFILSLYNVLTFGIIN) threads the bilayer. Residues 266–275 (KKVSDPHKCT) lie on the Cytoplasmic side of the membrane. A helical membrane pass occupies residues 276-296 (CFFSGSIALVNLCDIITYGIG). The Extracellular segment spans residues 297-321 (YEELLCPEPGRSAKQQLDPVCGLTG). Residues 322 to 342 (AFFHLGITYCVLWSMTMGLVL) traverse the membrane as a helical segment. Topologically, residues 343 to 353 (YCSVKRQKWFK) are cytoplasmic. The chain crosses the membrane as a helical span at residues 354-374 (FNYFLIGNTTFTITTVVIAAA). Topologically, residues 375–397 (TSKFEAGLGSIECWIRDRWYAIS) are extracellular. Residues 398–418 (LFWIPCGIALLIGSFCIIAVI) traverse the membrane as a helical segment. The Cytoplasmic segment spans residues 419-442 (HEVYKTSKKSISNRNDLLQRELKP). The helical transmembrane segment at 443–463 (LLIVIFISGSFLYLFIFFFDI) threads the bilayer. The Extracellular portion of the chain corresponds to 464-495 (ERKFGGYRSAVEDYVLCLLNGSQEECFTTGPS). N-linked (GlcNAc...) asparagine glycosylation occurs at Asn483. The chain crosses the membrane as a helical span at residues 496–516 (YVPYFLFYLVIRWFGIIFFLF). Over 517 to 591 (YGTSNIARKI…AVELESIKIN (75 aa)) the chain is Cytoplasmic. A compositionally biased stretch (low complexity) spans 538–571 (SSISPKSTPKSSPKNSDSKINSNSTNNNNMILND). Positions 538–573 (SSISPKSTPKSSPKNSDSKINSNSTNNNNMILNDNN) are disordered.

The protein belongs to the G-protein coupled receptor Fz/Smo family.

Its subcellular location is the membrane. The polypeptide is Frizzled and smoothened-like protein F (fslF) (Dictyostelium discoideum (Social amoeba)).